Consider the following 453-residue polypeptide: Bifunctional protein GlmU (453 aa).

Positions 1–226 (MKFSAVILAA…PIEVEGVNDR (226 aa)) are pyrophosphorylase. UDP-N-acetyl-alpha-D-glucosamine is bound by residues 8–11 (LAAG), Lys22, Gln73, 78–79 (GT), 100–102 (YGD), Gly137, Glu151, Asn166, and Asn224. Asp102 contributes to the Mg(2+) binding site. Mg(2+) is bound at residue Asn224. Residues 227–247 (AQLARLERAFQAAQAKKLLEQ) are linker. Residues 248–453 (GVMLRDPARF…TGWQRPVKKK (206 aa)) are N-acetyltransferase. UDP-N-acetyl-alpha-D-glucosamine-binding residues include Arg330 and Lys348. His360 functions as the Proton acceptor in the catalytic mechanism. Positions 363 and 374 each coordinate UDP-N-acetyl-alpha-D-glucosamine. Acetyl-CoA contacts are provided by residues Ala377, 383–384 (NY), Ser402, Ala420, and Arg437.

It in the N-terminal section; belongs to the N-acetylglucosamine-1-phosphate uridyltransferase family. In the C-terminal section; belongs to the transferase hexapeptide repeat family. Homotrimer. Mg(2+) serves as cofactor.

Its subcellular location is the cytoplasm. The catalysed reaction is alpha-D-glucosamine 1-phosphate + acetyl-CoA = N-acetyl-alpha-D-glucosamine 1-phosphate + CoA + H(+). It carries out the reaction N-acetyl-alpha-D-glucosamine 1-phosphate + UTP + H(+) = UDP-N-acetyl-alpha-D-glucosamine + diphosphate. The protein operates within nucleotide-sugar biosynthesis; UDP-N-acetyl-alpha-D-glucosamine biosynthesis; N-acetyl-alpha-D-glucosamine 1-phosphate from alpha-D-glucosamine 6-phosphate (route II): step 2/2. It participates in nucleotide-sugar biosynthesis; UDP-N-acetyl-alpha-D-glucosamine biosynthesis; UDP-N-acetyl-alpha-D-glucosamine from N-acetyl-alpha-D-glucosamine 1-phosphate: step 1/1. It functions in the pathway bacterial outer membrane biogenesis; LPS lipid A biosynthesis. Catalyzes the last two sequential reactions in the de novo biosynthetic pathway for UDP-N-acetylglucosamine (UDP-GlcNAc). The C-terminal domain catalyzes the transfer of acetyl group from acetyl coenzyme A to glucosamine-1-phosphate (GlcN-1-P) to produce N-acetylglucosamine-1-phosphate (GlcNAc-1-P), which is converted into UDP-GlcNAc by the transfer of uridine 5-monophosphate (from uridine 5-triphosphate), a reaction catalyzed by the N-terminal domain. This is Bifunctional protein GlmU from Vibrio vulnificus (strain CMCP6).